Consider the following 256-residue polypeptide: Short-chain dehydrogenase/reductase cdmF (256 aa).

NADP(+) contacts are provided by Val-11, Asp-57, and Arg-119. Ser-137 acts as the Proton donor in catalysis. The NADP(+) site is built by Tyr-151, Lys-155, Gly-183, and Asn-187. Residue Tyr-151 is the Proton acceptor of the active site. Lys-155 acts as the Lowers pKa of active site Tyr in catalysis.

The protein belongs to the short-chain dehydrogenases/reductases (SDR) family.

It catalyses the reaction 3-hydroxypentacecilide A + A = chrodrimanin C + AH2. The catalysed reaction is chrodrimanin F + A = chrodrimanin H + AH2. The protein operates within secondary metabolite biosynthesis; terpenoid biosynthesis. Its function is as follows. Short-chain dehydrogenase/reductase; part of the gene cluster that mediates the biosynthesis of chrodrimanin B, a meroterpenoid that acts as a potent blocker of insect GABA-gated chloride channels. The first step of the pathway is the biosynthesis of 6-hydroxymellein by the polyketide synthase cdmE. The prenyltransferase cdmH acts as a 6-hydroxymellein 5-farnesyltransferase and produces the hydrophobic metabolite verruculide C. The FAD-dependent monooxygenase cdmI further converts verruculide C into verruculide B. The terpene cyclase cdmG then produced the pentacyclic molecule 3-hydroxypentacecilide A, the backbone structure of chrodrimanin B, via folding the farnesyl moiety of the substrate into the chair-boat conformation. The short-chain dehydrogenase/reductase cdmF functions as the 3-OH dehydrogenase that oxidizes the C-3 hydroxyl group of 3-hydroxypentacecilide A and produces chrodrimanin C, the dehydrogenated product of 3-hydroxypentacecilide A. The cytochrome P450 monooxygenase cdmJ then accepts both 3-hydroxypentacecilide A and chrodrimanin C and functions as a C-7-beta-hydroxylase to produce respectively chrodrimanin H and chrodrimanin F. The dioxygenase cdmA accepts chrodrimanin H to afford chrodrimanin E, which is further transformed to chrodrimanin A by the dioxygenase cdmD. CdmA can also accept chrodrimanin C as substrate to convert it into verruculide A, which is further converted into chrodrimanin T by cdmD. The last step of the biosynthesis is proposed to be performed by the acetyltransferase cdmC which acetylates chrodrimanin A to yield chrodrimanin B. The pathway may also lead to the production of additional shunt products, including chrodrimanins T and U. In Talaromyces verruculosus (Penicillium verruculosum), this protein is Short-chain dehydrogenase/reductase cdmF.